The following is a 165-amino-acid chain: Putative pre-16S rRNA nuclease (165 aa).

This sequence belongs to the YqgF nuclease family.

The protein resides in the cytoplasm. Could be a nuclease involved in processing of the 5'-end of pre-16S rRNA. This is Putative pre-16S rRNA nuclease from Beijerinckia indica subsp. indica (strain ATCC 9039 / DSM 1715 / NCIMB 8712).